Reading from the N-terminus, the 268-residue chain is Very-long-chain aldehyde decarbonylase GL1-8 (268 aa).

4 helical membrane-spanning segments follow: residues isoleucine 26–phenylalanine 46, cysteine 70–tyrosine 90, tryptophan 107–tryptophan 127, and isoleucine 164–threonine 184. In terms of domain architecture, Fatty acid hydroxylase spans valine 114–threonine 249.

The protein belongs to the sterol desaturase family. In terms of assembly, homodimer.

The protein localises to the endoplasmic reticulum membrane. It carries out the reaction a long-chain fatty aldehyde + 2 NADPH + O2 + H(+) = a long-chain alkane + formate + 2 NADP(+) + H2O. Aldehyde decarbonylase involved in the conversion of aldehydes to alkanes. Core component of a very-long-chain alkane synthesis complex. This Oryza sativa subsp. indica (Rice) protein is Very-long-chain aldehyde decarbonylase GL1-8.